The chain runs to 1427 residues: DNA-directed RNA polymerase subunit beta' (1427 aa).

4 residues coordinate Zn(2+): cysteine 70, cysteine 72, cysteine 85, and cysteine 88. Mg(2+) is bound by residues aspartate 461, aspartate 463, and aspartate 465. Positions 810, 884, 891, and 894 each coordinate Zn(2+). Disordered regions lie at residues 1044–1065 and 1394–1427; these read QTDE…AGRG and PEAA…GDEA.

Belongs to the RNA polymerase beta' chain family. The RNAP catalytic core consists of 2 alpha, 1 beta, 1 beta' and 1 omega subunit. When a sigma factor is associated with the core the holoenzyme is formed, which can initiate transcription. It depends on Mg(2+) as a cofactor. Zn(2+) is required as a cofactor.

It catalyses the reaction RNA(n) + a ribonucleoside 5'-triphosphate = RNA(n+1) + diphosphate. Its function is as follows. DNA-dependent RNA polymerase catalyzes the transcription of DNA into RNA using the four ribonucleoside triphosphates as substrates. In Novosphingobium aromaticivorans (strain ATCC 700278 / DSM 12444 / CCUG 56034 / CIP 105152 / NBRC 16084 / F199), this protein is DNA-directed RNA polymerase subunit beta'.